The chain runs to 62 residues: Conotoxin Sr5.7 (62 aa).

Positions 1–22 (MRCLPVFVILLLLIASAPSVDA) are cleaved as a signal peptide. Positions 23 to 44 (QLKTKDDVPLASFHDNAKGTQH) are excised as a propeptide.

It belongs to the conotoxin T superfamily. In terms of processing, contains 2 disulfide bonds that can be either 'C1-C3, C2-C4' or 'C1-C4, C2-C3', since these disulfide connectivities have been observed for conotoxins with cysteine framework V (for examples, see AC P0DQQ7 and AC P81755). Expressed by the venom duct.

It localises to the secreted. This chain is Conotoxin Sr5.7, found in Conus spurius (Alphabet cone).